The sequence spans 485 residues: Skb1 localization factor 1 (485 aa).

Residues 1-200 are sufficient for interaction with Skb1; that stretch reads MSSIIQNPIE…VDDSDLTPHT (200 aa). Disordered stretches follow at residues 117–230, 286–416, and 446–466; these read NAAN…MSRN, ETQH…LRRS, and TTQE…KPEK. A compositionally biased stretch (polar residues) spans 171-182; it reads SRSSRYSKTSDL. Residues 189–198 show a composition bias toward basic and acidic residues; sequence RFVDDSDLTP. Composition is skewed to polar residues over residues 218–230 and 341–363; these read GRSS…MSRN and VGSS…QQDS. At Ser-222 the chain carries Phosphoserine. Over residues 371–393 the composition is skewed to basic and acidic residues; sequence SERSYRRVRDQYLSKPRLSDKNR. Residues 394 to 416 are compositionally biased toward polar residues; it reads YSTFSEFPGQGTPSASQSNLRRS. Positions 447–464 are enriched in basic and acidic residues; the sequence is TQERKPVVKPDSIKTVKP. A required and sufficient for plasma membrane anchoring; lysine-rich, may bind to anionic lipids in the plasma membrane region spans residues 451–485; the sequence is KPVVKPDSIKTVKPEKKKSKGFFKKLMHKISHIFD. Residue Ser-458 is modified to Phosphoserine.

Interacts with Skb1.

The protein resides in the cell membrane. Acts as a membrane anchor for Skb1 in forming plasma membrane microdomains. Promotes mitotic entry by sequestering mitotic inhibitor Skb1 from its regulatory targets Cdr1 and Wee1. The chain is Skb1 localization factor 1 from Schizosaccharomyces pombe (strain 972 / ATCC 24843) (Fission yeast).